The primary structure comprises 31 residues: Delta-conotoxin-like ErVIA (31 aa).

A propeptide spanning residues 1 to 4 (LNKR) is cleaved from the precursor. Cystine bridges form between C5–C21, C12–C25, and C20–C29.

The protein belongs to the conotoxin O1 superfamily. Expressed by the venom duct.

It is found in the secreted. Functionally, this toxin activates voltage-gated sodium channels. It shifts the voltage-dependence of activation to more hyperpolarized potentials but has only little effect on channel inactivation. It is active on Nav1.3/SCN3A (EC(50)=3.98 nM), Nav1.4/SCN4A (EC(50)=4.99 nM), Nav1.6/SCN8A (EC(50)=1.27 nM) and Nav1.7/SCN9A (EC(50)=2.42 nM) voltage-gated sodium channels. In vivo, it induces nocifensive or pain-like behaviors in mice when injected intraplantarly. This chain is Delta-conotoxin-like ErVIA, found in Conus eburneus (Ivory cone).